We begin with the raw amino-acid sequence, 143 residues long: Small ribosomal subunit protein bS6 (143 aa).

The disordered stretch occupies residues 100 to 143; sequence SPIIKMKDERREVVELTTSGSEDNQKDHHKEDLDKKTDEFSEEN. 2 stretches are compositionally biased toward basic and acidic residues: residues 104–113 and 122–143; these read KMKDERREVV and DNQK…SEEN.

Belongs to the bacterial ribosomal protein bS6 family.

Its function is as follows. Binds together with bS18 to 16S ribosomal RNA. The protein is Small ribosomal subunit protein bS6 of Hamiltonella defensa subsp. Acyrthosiphon pisum (strain 5AT).